The chain runs to 465 residues: Cysteine--tRNA ligase (465 aa).

Cys28 provides a ligand contact to Zn(2+). The 'HIGH' region signature appears at 30–40 (PTVYNYIHVGN). Cys208, His233, and Glu237 together coordinate Zn(2+). The short motif at 265-269 (KMSKS) is the 'KMSKS' region element. An ATP-binding site is contributed by Lys268.

It belongs to the class-I aminoacyl-tRNA synthetase family. Monomer. Zn(2+) is required as a cofactor.

It is found in the cytoplasm. The catalysed reaction is tRNA(Cys) + L-cysteine + ATP = L-cysteinyl-tRNA(Cys) + AMP + diphosphate. The chain is Cysteine--tRNA ligase from Exiguobacterium sp. (strain ATCC BAA-1283 / AT1b).